Reading from the N-terminus, the 302-residue chain is tRNA-cytidine(32) 2-sulfurtransferase (302 aa).

The PP-loop motif signature appears at S45 to S50. The [4Fe-4S] cluster site is built by C120, C123, and C211.

This sequence belongs to the TtcA family. In terms of assembly, homodimer. Mg(2+) is required as a cofactor. It depends on [4Fe-4S] cluster as a cofactor.

Its subcellular location is the cytoplasm. It catalyses the reaction cytidine(32) in tRNA + S-sulfanyl-L-cysteinyl-[cysteine desulfurase] + AH2 + ATP = 2-thiocytidine(32) in tRNA + L-cysteinyl-[cysteine desulfurase] + A + AMP + diphosphate + H(+). Its pathway is tRNA modification. Catalyzes the ATP-dependent 2-thiolation of cytidine in position 32 of tRNA, to form 2-thiocytidine (s(2)C32). The sulfur atoms are provided by the cysteine/cysteine desulfurase (IscS) system. This chain is tRNA-cytidine(32) 2-sulfurtransferase, found in Aeromonas hydrophila subsp. hydrophila (strain ATCC 7966 / DSM 30187 / BCRC 13018 / CCUG 14551 / JCM 1027 / KCTC 2358 / NCIMB 9240 / NCTC 8049).